A 488-amino-acid polypeptide reads, in one-letter code: Diacylglycerol kinase 3 (488 aa).

The disordered stretch occupies residues 1–24 (MDSPVSKTDASKEKFVASRPSTAD). The DAGKc domain occupies 87 to 245 (APHAPMVVFI…SWKILVSMPS (159 aa)).

This sequence belongs to the eukaryotic diacylglycerol kinase family. Monomer.

The catalysed reaction is a 1,2-diacyl-sn-glycerol + ATP = a 1,2-diacyl-sn-glycero-3-phosphate + ADP + H(+). Phosphorylates the second messenger diacylglycerol (DAG) to generate phosphatidic acid (PA), another important signaling molecule. PA is required for plant development and responses to abiotic stress and pathogen attack. May be involved in the accumulation of PA during cold stress. This is Diacylglycerol kinase 3 (DGK3) from Arabidopsis thaliana (Mouse-ear cress).